Reading from the N-terminus, the 112-residue chain is Small ribosomal subunit protein bS6 (112 aa).

The protein belongs to the bacterial ribosomal protein bS6 family.

In terms of biological role, binds together with bS18 to 16S ribosomal RNA. The chain is Small ribosomal subunit protein bS6 from Azobacteroides pseudotrichonymphae genomovar. CFP2.